Consider the following 539-residue polypeptide: Keratin, type II cytoskeletal 73 (539 aa).

The tract at residues 1-130 (MNRQFTCKPG…DPEIQKVRAQ (130 aa)) is head. The tract at residues 131-166 (EREQIKALNNKFASFIDKVRFLEQQNQVLQTKWELL) is coil 1A. Residues 131–444 (EREQIKALNN…KLLEGEECRM (314 aa)) form the IF rod domain. Residues 167 to 185 (QQLDLSNCRRNLEPVYEAH) are linker 1. The coil 1B stretch occupies residues 186–277 (ISSLQKQLDS…CLYEGEITQM (92 aa)). The segment at 278-301 (QSHISDTSVVLSMDNNRNLDLDSI) is linker 12. The interval 302-440 (IAEVRAQYED…ATYRKLLEGE (139 aa)) is coil 2. The tail stretch occupies residues 441 to 539 (ECRMSGEHTS…LGSPSKKTMR (99 aa)).

It belongs to the intermediate filament family. In terms of assembly, heterotetramer of two type I and two type II keratins.

Functionally, has a role in hair formation. Specific component of keratin intermediate filaments in the inner root sheath (IRS) of the hair follicle. This is Keratin, type II cytoskeletal 73 (Krt73) from Mus musculus (Mouse).